Consider the following 160-residue polypeptide: Cytochrome b6-f complex subunit 4 (160 aa).

3 consecutive transmembrane segments (helical) span residues 36 to 56 (LLYM…GLAV), 95 to 115 (LLGI…PFIE), and 131 to 151 (AVFL…ALPI).

Belongs to the cytochrome b family. PetD subfamily. As to quaternary structure, the 4 large subunits of the cytochrome b6-f complex are cytochrome b6, subunit IV (17 kDa polypeptide, PetD), cytochrome f and the Rieske protein, while the 4 small subunits are PetG, PetL, PetM and PetN. The complex functions as a dimer.

It localises to the cellular thylakoid membrane. In terms of biological role, component of the cytochrome b6-f complex, which mediates electron transfer between photosystem II (PSII) and photosystem I (PSI), cyclic electron flow around PSI, and state transitions. The polypeptide is Cytochrome b6-f complex subunit 4 (Synechococcus elongatus (strain ATCC 33912 / PCC 7942 / FACHB-805) (Anacystis nidulans R2)).